The chain runs to 289 residues: MALNISVKVHPVVLFQIVDAYERRNADSHRVIGTLWGTSDKGVVEVTNCFCVPHKEHADQVEAELNYAMDVYELNRRVNSSESIVGWWATGNEVTNHSSVIHEYYSRECREPVHVTLDTSLAGGRMGLRAYVCVPLGVPNGKQGCMFTPVDVTLTCYEPEIVGLQVCQKTVSGGGRGSSGVAAGSDLAQVMSAASSLESLLEQALQYADGAAAGAPADAEAGRALLQLAHSAPDLAKDTFSDAFASSVKDLLMVVTLAQLIKTQLQLNEKLTLLTSPVNTTIYKGRPNV.

The 131-residue stretch at 7–137 (VKVHPVVLFQ…LRAYVCVPLG (131 aa)) folds into the MPN domain.

It belongs to the eIF-3 subunit F family. In terms of assembly, component of the eukaryotic translation initiation factor 3 (eIF-3) complex.

The protein resides in the cytoplasm. In terms of biological role, component of the eukaryotic translation initiation factor 3 (eIF-3) complex, which is involved in protein synthesis of a specialized repertoire of mRNAs and, together with other initiation factors, stimulates binding of mRNA and methionyl-tRNAi to the 40S ribosome. The eIF-3 complex specifically targets and initiates translation of a subset of mRNAs involved in cell proliferation. The polypeptide is Eukaryotic translation initiation factor 3 subunit F (Bombyx mori (Silk moth)).